A 939-amino-acid polypeptide reads, in one-letter code: Zinc finger RNA-binding protein 2 (939 aa).

Disordered regions lie at residues 1–72 (MATS…AYGS), 116–185 (GRMT…IVTS), 217–264 (FYPP…PKAG), 289–314 (HLGG…SPRG), 360–389 (LEPA…ASSR), 401–449 (ALCE…DAQP), 545–590 (RLEE…SSDD), and 906–939 (RLGA…EGLV). Composition is skewed to polar residues over residues 137 to 147 (PHGSHSHAQPP) and 157 to 184 (QPAS…SIVT). The segment covering 217-239 (FYPPAQPPPPPGPPQQLPPPPAP) has biased composition (pro residues). Residues 516-549 (KVLEERMRKQRHLAEERLEQLRRWHAERRRLEEE) adopt a coiled-coil conformation. The 366-residue stretch at 570–935 (RPESPASAPL…GEKKRGRRGG (366 aa)) folds into the DZF domain. Residues 906-916 (RLGARFRKRQR) are compositionally biased toward basic residues.

In Homo sapiens (Human), this protein is Zinc finger RNA-binding protein 2 (ZFR2).